The chain runs to 129 residues: Small ribosomal subunit protein bS6 (129 aa).

It belongs to the bacterial ribosomal protein bS6 family.

Functionally, binds together with bS18 to 16S ribosomal RNA. The polypeptide is Small ribosomal subunit protein bS6 (Microcystis aeruginosa (strain NIES-843 / IAM M-2473)).